Here is a 295-residue protein sequence, read N- to C-terminus: Ankyrin repeat and SOCS box protein 17 (295 aa).

One copy of the ANK repeat lies at 146–176; the sequence is SGITPLLYVAQTRQSNILKILLQYGILEREK. Residues 232–295 enclose the SOCS box domain; that stretch reads LGRRPIISNW…RLQKYLNLES (64 aa).

This sequence belongs to the ankyrin SOCS box (ASB) family.

It functions in the pathway protein modification; protein ubiquitination. Its function is as follows. May be a substrate-recognition component of a SCF-like ECS (Elongin-Cullin-SOCS-box protein) E3 ubiquitin-protein ligase complex which mediates the ubiquitination and subsequent proteasomal degradation of target proteins. The polypeptide is Ankyrin repeat and SOCS box protein 17 (ASB17) (Canis lupus familiaris (Dog)).